The chain runs to 740 residues: Ion-translocating oxidoreductase complex subunit C (740 aa).

4Fe-4S ferredoxin-type domains lie at 369-397 and 407-436; these read GEPQ…QQLY and KATT…VQYF. [4Fe-4S] cluster is bound by residues Cys-377, Cys-380, Cys-383, Cys-387, Cys-416, Cys-419, Cys-422, and Cys-426. Residues 602–717 form a disordered region; it reads KLEQQQANAE…PEEQVDPRKA (116 aa). 2 stretches are compositionally biased toward low complexity: residues 605-615 and 637-647; these read QQQANAEPEQQ.

Belongs to the 4Fe4S bacterial-type ferredoxin family. RnfC subfamily. As to quaternary structure, the complex is composed of six subunits: RsxA, RsxB, RsxC, RsxD, RsxE and RsxG. It depends on [4Fe-4S] cluster as a cofactor.

The protein localises to the cell inner membrane. Part of a membrane-bound complex that couples electron transfer with translocation of ions across the membrane. Required to maintain the reduced state of SoxR. The chain is Ion-translocating oxidoreductase complex subunit C from Escherichia coli (strain ATCC 8739 / DSM 1576 / NBRC 3972 / NCIMB 8545 / WDCM 00012 / Crooks).